The primary structure comprises 471 residues: Threonine--tRNA ligase catalytic subunit (471 aa).

The interval 8-333 (THIDYAYELD…YLEHRRGRMP (326 aa)) is catalytic. Residues Cys112, His166, and His310 each coordinate Zn(2+).

Belongs to the class-II aminoacyl-tRNA synthetase family. In terms of assembly, homodimer. Probably interacts with its editing subunit. It depends on Zn(2+) as a cofactor.

It is found in the cytoplasm. The catalysed reaction is tRNA(Thr) + L-threonine + ATP = L-threonyl-tRNA(Thr) + AMP + diphosphate + H(+). Functionally, catalyzes the attachment of threonine to tRNA(Thr) in a two-step reaction: L-threonine is first activated by ATP to form Thr-AMP and then transferred to the acceptor end of tRNA(Thr). This protein is probably not able to deacylate mischarged L-seryl-tRNA(Thr) as it lacks the appropriate domain. The polypeptide is Threonine--tRNA ligase catalytic subunit (Aeropyrum pernix (strain ATCC 700893 / DSM 11879 / JCM 9820 / NBRC 100138 / K1)).